Reading from the N-terminus, the 158-residue chain is SsrA-binding protein (158 aa).

This sequence belongs to the SmpB family.

It is found in the cytoplasm. Required for rescue of stalled ribosomes mediated by trans-translation. Binds to transfer-messenger RNA (tmRNA), required for stable association of tmRNA with ribosomes. tmRNA and SmpB together mimic tRNA shape, replacing the anticodon stem-loop with SmpB. tmRNA is encoded by the ssrA gene; the 2 termini fold to resemble tRNA(Ala) and it encodes a 'tag peptide', a short internal open reading frame. During trans-translation Ala-aminoacylated tmRNA acts like a tRNA, entering the A-site of stalled ribosomes, displacing the stalled mRNA. The ribosome then switches to translate the ORF on the tmRNA; the nascent peptide is terminated with the 'tag peptide' encoded by the tmRNA and targeted for degradation. The ribosome is freed to recommence translation, which seems to be the essential function of trans-translation. This is SsrA-binding protein from Acinetobacter baumannii (strain AB307-0294).